The sequence spans 360 residues: Cell division protein DivIB (360 aa).

Residues 1–54 (MTEKDSNVEESVLEVEQASQVELDSEQISPAEKESVLAEEKEFSTDVDIPEMTA) form a disordered region. At 1–139 (MTEKDSNVEE…VDIPSKVVWK (139 aa)) the chain is on the cytoplasmic side. Over residues 17-28 (QASQVELDSEQI) the composition is skewed to polar residues. The segment covering 31–44 (AEKESVLAEEKEFS) has biased composition (basic and acidic residues). The helical transmembrane segment at 140 to 160 (AIPVLVTSLLLAALALYFISP) threads the bilayer. The Extracellular segment spans residues 161–360 (TSKKKQIEVV…MEVGIYRYAS (200 aa)). The POTRA domain maps to 162–233 (SKKKQIEVVG…ATFTIHIKEY (72 aa)).

It belongs to the FtsQ/DivIB family. DivIB subfamily.

Its subcellular location is the cell membrane. Its function is as follows. Cell division protein that may be involved in stabilizing or promoting the assembly of the division complex. The chain is Cell division protein DivIB from Streptococcus suis (strain GZ1).